The chain runs to 443 residues: Phosphoglucosamine mutase (443 aa).

S100 acts as the Phosphoserine intermediate in catalysis. 4 residues coordinate Mg(2+): S100, D239, D241, and D243. S100 is subject to Phosphoserine.

It belongs to the phosphohexose mutase family. Mg(2+) serves as cofactor. Post-translationally, activated by phosphorylation.

It catalyses the reaction alpha-D-glucosamine 1-phosphate = D-glucosamine 6-phosphate. Its function is as follows. Catalyzes the conversion of glucosamine-6-phosphate to glucosamine-1-phosphate. The polypeptide is Phosphoglucosamine mutase (Shewanella sediminis (strain HAW-EB3)).